A 355-amino-acid polypeptide reads, in one-letter code: MGSLEKERTTTGWAARDPSGVLSPYTYSLRNTGPEDLYIKVLSCGICHSDIHQIKNDLGMSHYPMVPGHEVVGEVLEVGSEVTKYRVGDRVGTGIVVGCCRSCGPCNSDQEQYCNKKIWNYNDVYTDGKPTQGGFAGEIVVGQRFVVKIPDGLESEQDAVMCAGVTVYSPLVRFGLKQSGLRGGILGLGGVGHMGVKIAKAMGHHVTVISSSDKKRTEALEHLGADAYLVSSDENGMKEATDSLDYIFDTIPVVHPLEPYLALLKLDGKLILTGVINAPLQFISPMVMLGRKSITGSFIGSMKETEEMLEFCKEKGLTSQIEVIKMDYVNTALERLEKNDVRYRFVVDVAGSKLD.

Residue cysteine 47 coordinates Zn(2+). NADP(+) is bound at residue serine 49. 7 residues coordinate Zn(2+): histidine 69, glutamate 70, cysteine 100, cysteine 103, cysteine 106, cysteine 114, and cysteine 162. Residues threonine 166, 187–192 (GLGGVG), 210–215 (SSSDKK), threonine 250, glycine 274, and 297–299 (SFI) contribute to the NADP(+) site.

The protein belongs to the zinc-containing alcohol dehydrogenase family. Homodimer. Requires Zn(2+) as cofactor.

It catalyses the reaction (E)-cinnamyl alcohol + NADP(+) = (E)-cinnamaldehyde + NADPH + H(+). It carries out the reaction (E)-coniferol + NADP(+) = (E)-coniferaldehyde + NADPH + H(+). The enzyme catalyses (E)-sinapyl alcohol + NADP(+) = (E)-sinapaldehyde + NADPH + H(+). The catalysed reaction is (E)-4-coumaroyl alcohol + NADP(+) = (E)-4-coumaraldehyde + NADPH + H(+). It catalyses the reaction (E)-caffeyl alcohol + NADP(+) = (E)-caffeyl aldehyde + NADPH + H(+). Its pathway is aromatic compound metabolism; phenylpropanoid biosynthesis. In terms of biological role, involved in lignin biosynthesis. Catalyzes the final step specific for the production of lignin monomers. Catalyzes the NADPH-dependent reduction of coniferaldehyde, 5-hydroxyconiferaldehyde, sinapaldehyde, 4-coumaraldehyde and caffeyl aldehyde to their respective alcohols. The sequence is that of Probable cinnamyl alcohol dehydrogenase (CAD1) from Eucalyptus botryoides (Southern mahogany).